The following is a 248-amino-acid chain: Small ribosomal subunit protein eS6 (248 aa).

Residues V215–K248 are disordered. The span at A223–K248 shows a compositional bias: basic and acidic residues. Phosphoserine occurs at positions 233, 235, 239, 242, 244, and 245.

The protein belongs to the eukaryotic ribosomal protein eS6 family. Component of the small ribosomal subunit. Part of the small subunit (SSU) processome, composed of more than 70 proteins and the RNA chaperone small nucleolar RNA (snoRNA) U3. Post-translationally, ribosomal protein S6 is the major substrate of protein kinases in eukaryote ribosomes. The phosphorylation is stimulated by growth factors, tumor promoting agents, and mitogens. It is dephosphorylated at growth arrest.

It is found in the cytoplasm. Its subcellular location is the nucleus. It localises to the nucleolus. Its function is as follows. Component of the 40S small ribosomal subunit. Plays an important role in controlling cell growth and proliferation through the selective translation of particular classes of mRNA. Part of the small subunit (SSU) processome, first precursor of the small eukaryotic ribosomal subunit. During the assembly of the SSU processome in the nucleolus, many ribosome biogenesis factors, an RNA chaperone and ribosomal proteins associate with the nascent pre-rRNA and work in concert to generate RNA folding, modifications, rearrangements and cleavage as well as targeted degradation of pre-ribosomal RNA by the RNA exosome. The sequence is that of Small ribosomal subunit protein eS6 (RpS6) from Drosophila melanogaster (Fruit fly).